A 398-amino-acid chain; its full sequence is Elongation factor Tu (398 aa).

Positions 10 to 207 (KPHVNIGTIG…TVDEYIPEPE (198 aa)) constitute a tr-type G domain. Residues 19–26 (GHVDHGKT) form a G1 region. 19 to 26 (GHVDHGKT) provides a ligand contact to GTP. Thr-26 lines the Mg(2+) pocket. The segment at 63–67 (GITIN) is G2. The tract at residues 84–87 (DAPG) is G3. GTP-binding positions include 84–88 (DAPGH) and 139–142 (NKVD). The segment at 139–142 (NKVD) is G4. Residues 177 to 179 (SAL) are G5.

The protein belongs to the TRAFAC class translation factor GTPase superfamily. Classic translation factor GTPase family. EF-Tu/EF-1A subfamily. Monomer.

Its subcellular location is the cytoplasm. The enzyme catalyses GTP + H2O = GDP + phosphate + H(+). Functionally, GTP hydrolase that promotes the GTP-dependent binding of aminoacyl-tRNA to the A-site of ribosomes during protein biosynthesis. The protein is Elongation factor Tu of Streptococcus agalactiae serotype V (strain ATCC BAA-611 / 2603 V/R).